The primary structure comprises 270 residues: UPF0354 protein BCA_4815 (270 aa).

This sequence belongs to the UPF0354 family.

The chain is UPF0354 protein BCA_4815 from Bacillus cereus (strain 03BB102).